A 180-amino-acid polypeptide reads, in one-letter code: NADH-quinone oxidoreductase subunit I (180 aa).

4Fe-4S ferredoxin-type domains follow at residues 44 to 74 (LNRY…VEGA) and 90 to 119 (RVYQ…MTTE). Positions 54, 57, 60, 64, 99, 102, 105, and 109 each coordinate [4Fe-4S] cluster. The segment at 145–180 (MQAPPHDMAPGKTDDDYYLGNVTPITPVPSGTEDAR) is disordered.

Belongs to the complex I 23 kDa subunit family. NDH-1 is composed of 14 different subunits. Subunits NuoA, H, J, K, L, M, N constitute the membrane sector of the complex. [4Fe-4S] cluster is required as a cofactor.

Its subcellular location is the cell membrane. The catalysed reaction is a quinone + NADH + 5 H(+)(in) = a quinol + NAD(+) + 4 H(+)(out). Functionally, NDH-1 shuttles electrons from NADH, via FMN and iron-sulfur (Fe-S) centers, to quinones in the respiratory chain. The immediate electron acceptor for the enzyme in this species is believed to be menaquinone. Couples the redox reaction to proton translocation (for every two electrons transferred, four hydrogen ions are translocated across the cytoplasmic membrane), and thus conserves the redox energy in a proton gradient. The chain is NADH-quinone oxidoreductase subunit I from Mycolicibacterium smegmatis (strain ATCC 700084 / mc(2)155) (Mycobacterium smegmatis).